We begin with the raw amino-acid sequence, 424 residues long: Zinc finger and BTB domain-containing protein 6 (424 aa).

Residues 33 to 97 (CDVSIYINDT…CYTGALEVKR (65 aa)) form the BTB domain. Ser202 is modified (phosphoserine). 4 consecutive C2H2-type zinc fingers follow at residues 301-323 (HQCP…LKMH), 326-348 (FLCL…IRGH), 354-376 (FQCT…LNIH), and 382-405 (YKCH…TSLH). Residues 403 to 424 (SLHGRSSGEKLPRHDLERQNLL) are disordered. The segment covering 408–424 (SSGEKLPRHDLERQNLL) has biased composition (basic and acidic residues).

The protein localises to the nucleus. May be involved in transcriptional regulation. The polypeptide is Zinc finger and BTB domain-containing protein 6 (ZBTB6) (Bos taurus (Bovine)).